Reading from the N-terminus, the 408-residue chain is Serine-rich antigen (408 aa).

2 consecutive repeat copies span residues 209 to 214 (SVAQSE) and 230 to 235 (SVAQSE). A 2 X 6 AA repeats of S-V-A-Q-S-E region spans residues 209 to 235 (SVAQSEEHGSDSMSQSYNTCGSVAQSE).

The protein belongs to the mycobacterial PPE family.

The protein is Serine-rich antigen (sra) of Mycobacterium leprae (strain TN).